A 285-amino-acid polypeptide reads, in one-letter code: Bifunctional protein FolD (285 aa).

NADP(+) is bound by residues 166–168 (GAS) and Ile232.

It belongs to the tetrahydrofolate dehydrogenase/cyclohydrolase family. In terms of assembly, homodimer.

It carries out the reaction (6R)-5,10-methylene-5,6,7,8-tetrahydrofolate + NADP(+) = (6R)-5,10-methenyltetrahydrofolate + NADPH. The enzyme catalyses (6R)-5,10-methenyltetrahydrofolate + H2O = (6R)-10-formyltetrahydrofolate + H(+). Its pathway is one-carbon metabolism; tetrahydrofolate interconversion. Its function is as follows. Catalyzes the oxidation of 5,10-methylenetetrahydrofolate to 5,10-methenyltetrahydrofolate and then the hydrolysis of 5,10-methenyltetrahydrofolate to 10-formyltetrahydrofolate. In Vibrio atlanticus (strain LGP32) (Vibrio splendidus (strain Mel32)), this protein is Bifunctional protein FolD.